We begin with the raw amino-acid sequence, 617 residues long: Dihydroxy-acid dehydratase (617 aa).

Asp81 serves as a coordination point for Mg(2+). Position 122 (Cys122) interacts with [2Fe-2S] cluster. Residues Asp123 and Lys124 each coordinate Mg(2+). The residue at position 124 (Lys124) is an N6-carboxylysine. A [2Fe-2S] cluster-binding site is contributed by Cys195. Glu491 lines the Mg(2+) pocket. Ser517 acts as the Proton acceptor in catalysis.

This sequence belongs to the IlvD/Edd family. In terms of assembly, homodimer. Requires [2Fe-2S] cluster as cofactor. Mg(2+) serves as cofactor.

It carries out the reaction (2R)-2,3-dihydroxy-3-methylbutanoate = 3-methyl-2-oxobutanoate + H2O. The enzyme catalyses (2R,3R)-2,3-dihydroxy-3-methylpentanoate = (S)-3-methyl-2-oxopentanoate + H2O. The protein operates within amino-acid biosynthesis; L-isoleucine biosynthesis; L-isoleucine from 2-oxobutanoate: step 3/4. It functions in the pathway amino-acid biosynthesis; L-valine biosynthesis; L-valine from pyruvate: step 3/4. Its function is as follows. Functions in the biosynthesis of branched-chain amino acids. Catalyzes the dehydration of (2R,3R)-2,3-dihydroxy-3-methylpentanoate (2,3-dihydroxy-3-methylvalerate) into 2-oxo-3-methylpentanoate (2-oxo-3-methylvalerate) and of (2R)-2,3-dihydroxy-3-methylbutanoate (2,3-dihydroxyisovalerate) into 2-oxo-3-methylbutanoate (2-oxoisovalerate), the penultimate precursor to L-isoleucine and L-valine, respectively. The protein is Dihydroxy-acid dehydratase of Nitrosococcus oceani (strain ATCC 19707 / BCRC 17464 / JCM 30415 / NCIMB 11848 / C-107).